Here is a 347-residue protein sequence, read N- to C-terminus: Cell division protein FtsQ (347 aa).

The tract at residues 1 to 55 (MARNGNPQFPDERSTATRAKATEPEELDDRFSDLEPEEDSPFLRSQKRVPVRRGP) is disordered. Residues 1–66 (MARNGNPQFP…PSKKAANRVK (66 aa)) are Cytoplasmic-facing. A compositionally biased stretch (basic and acidic residues) spans 10-33 (PDERSTATRAKATEPEELDDRFSD). The chain crosses the membrane as a helical span at residues 67–87 (IALIVLGVLVVIGGVWMALSA). Residues 88 to 347 (YGEHSWRFRL…PTAHTSGRRH (260 aa)) lie on the Periplasmic side of the membrane. Positions 98-166 (ESSDSIEVGG…DRIRVQVTER (69 aa)) constitute a POTRA domain. Positions 308-347 (DSHPSAAKPTAPAVAPAVEKPAVAKPAVAKPTAHTSGRRH) are disordered. The segment covering 313–340 (AAKPTAPAVAPAVEKPAVAKPAVAKPTA) has biased composition (low complexity).

This sequence belongs to the FtsQ/DivIB family. FtsQ subfamily.

The protein localises to the cell inner membrane. In terms of biological role, essential cell division protein. In Koribacter versatilis (strain Ellin345), this protein is Cell division protein FtsQ.